The chain runs to 611 residues: Elongation factor 4 (611 aa).

One can recognise a tr-type G domain in the interval 12-193 (AVIRNFCIIA…TIVAKVPAPE (182 aa)). Residues 24–29 (DHGKST) and 140–143 (NKID) contribute to the GTP site.

Belongs to the TRAFAC class translation factor GTPase superfamily. Classic translation factor GTPase family. LepA subfamily.

The protein resides in the cell membrane. It catalyses the reaction GTP + H2O = GDP + phosphate + H(+). Functionally, required for accurate and efficient protein synthesis under certain stress conditions. May act as a fidelity factor of the translation reaction, by catalyzing a one-codon backward translocation of tRNAs on improperly translocated ribosomes. Back-translocation proceeds from a post-translocation (POST) complex to a pre-translocation (PRE) complex, thus giving elongation factor G a second chance to translocate the tRNAs correctly. Binds to ribosomes in a GTP-dependent manner. The protein is Elongation factor 4 of Cutibacterium acnes (strain DSM 16379 / KPA171202) (Propionibacterium acnes).